The following is a 459-amino-acid chain: Probable ECA polymerase (459 aa).

Helical transmembrane passes span 3 to 23, 37 to 57, 65 to 85, 119 to 139, 154 to 174, 181 to 201, 206 to 226, 227 to 247, 340 to 360, 377 to 397, and 409 to 429; these read LTQF…ILTL, IFFS…TCLL, VVPV…YGIY, LASV…FLLF, GVAL…VYFL, WLFF…VVGG, IIIA…ITLW, MLVT…LKRY, LVVM…GLII, YKAA…IVLA, and VFFC…YWLF.

It belongs to the WzyE family. As to quaternary structure, probably part of a complex composed of WzxE, WzyE and WzzE.

Its subcellular location is the cell inner membrane. It participates in bacterial outer membrane biogenesis; enterobacterial common antigen biosynthesis. Its function is as follows. Probably involved in the polymerization of enterobacterial common antigen (ECA) trisaccharide repeat units. In Photorhabdus laumondii subsp. laumondii (strain DSM 15139 / CIP 105565 / TT01) (Photorhabdus luminescens subsp. laumondii), this protein is Probable ECA polymerase.